A 110-amino-acid polypeptide reads, in one-letter code: Large ribosomal subunit protein uL22 (110 aa).

This sequence belongs to the universal ribosomal protein uL22 family. Part of the 50S ribosomal subunit.

Its function is as follows. This protein binds specifically to 23S rRNA; its binding is stimulated by other ribosomal proteins, e.g. L4, L17, and L20. It is important during the early stages of 50S assembly. It makes multiple contacts with different domains of the 23S rRNA in the assembled 50S subunit and ribosome. In terms of biological role, the globular domain of the protein is located near the polypeptide exit tunnel on the outside of the subunit, while an extended beta-hairpin is found that lines the wall of the exit tunnel in the center of the 70S ribosome. The sequence is that of Large ribosomal subunit protein uL22 from Glaesserella parasuis serovar 5 (strain SH0165) (Haemophilus parasuis).